Consider the following 99-residue polypeptide: NADH-ubiquinone oxidoreductase chain 2 (99 aa).

A run of 2 helical transmembrane segments spans residues 22–42 (FLTF…IQII) and 65–85 (VMIS…SIFI).

The protein belongs to the complex I subunit 2 family.

The protein resides in the mitochondrion inner membrane. It catalyses the reaction a ubiquinone + NADH + 5 H(+)(in) = a ubiquinol + NAD(+) + 4 H(+)(out). Core subunit of the mitochondrial membrane respiratory chain NADH dehydrogenase (Complex I) that is believed to belong to the minimal assembly required for catalysis. Complex I functions in the transfer of electrons from NADH to the respiratory chain. The immediate electron acceptor for the enzyme is believed to be ubiquinone. In Cyanidium caldarium (Red alga), this protein is NADH-ubiquinone oxidoreductase chain 2 (ND2).